The primary structure comprises 1342 residues: DNA-directed RNA polymerase subunit beta (1342 aa).

The protein belongs to the RNA polymerase beta chain family. The RNAP catalytic core consists of 2 alpha, 1 beta, 1 beta' and 1 omega subunit. When a sigma factor is associated with the core the holoenzyme is formed, which can initiate transcription.

It catalyses the reaction RNA(n) + a ribonucleoside 5'-triphosphate = RNA(n+1) + diphosphate. Its function is as follows. DNA-dependent RNA polymerase catalyzes the transcription of DNA into RNA using the four ribonucleoside triphosphates as substrates. In Aliivibrio fischeri (strain ATCC 700601 / ES114) (Vibrio fischeri), this protein is DNA-directed RNA polymerase subunit beta.